We begin with the raw amino-acid sequence, 281 residues long: Penicillin-insensitive murein endopeptidase (281 aa).

Positions 1-24 (MKQGLIGVLALALGATLLSSAVWA) are cleaved as a signal peptide. Disulfide bonds link Cys49/Cys270, Cys192/Cys240, and Cys221/Cys228. 4 residues coordinate Zn(2+): His115, His118, Asp125, and His216. The disordered stretch occupies residues 230 to 271 (EQSEPPIGDGCGAELTSWFQPKQPSSEAPEKTTPPPLPPSCQ). Residues 246–255 (SWFQPKQPSS) show a composition bias toward polar residues.

The protein belongs to the peptidase M74 family. Dimer. Requires Zn(2+) as cofactor.

It is found in the periplasm. Murein endopeptidase that cleaves the D-alanyl-meso-2,6-diamino-pimelyl amide bond that connects peptidoglycan strands. Likely plays a role in the removal of murein from the sacculus. In Pectobacterium atrosepticum (strain SCRI 1043 / ATCC BAA-672) (Erwinia carotovora subsp. atroseptica), this protein is Penicillin-insensitive murein endopeptidase (mepA).